The chain runs to 863 residues: Receptor-like protein 9DC3 (863 aa).

An N-terminal signal peptide occupies residues 1–21; the sequence is MGCVKLVFFMLYVFLFQLVSS. The Extracellular segment spans residues 22–812; that stretch reads SSLPHLCPED…EEDSPMISWQ (791 aa). The interval 24 to 90 is N-cap; sequence LPHLCPEDQA…GVHCDETTGQ (67 aa). N-linked (GlcNAc...) asparagine glycosylation is found at N71 and N108. One copy of the LRR 1; degenerate repeat lies at 91-114; it reads VIALDLRCSQLQGKFHSNSSLFQL. 2 LRR repeats span residues 115–138 and 140–163; these read SNLK…KFGE and SDLT…ISHL. The LRR 4; degenerate repeat unit spans residues 164 to 190; sequence SKLHVLLIGDQYGLSIVPHNFEPLLKN. N-linked (GlcNAc...) asparagine glycans are attached at residues N190, N203, and N211. 6 LRR repeats span residues 191 to 213, 214 to 237, 240 to 262, 264 to 286, 287 to 311, and 312 to 336; these read LTQL…SNFS, SHLT…VFHL, LEFL…KWNS, ASLM…SFSH, LTSL…LWNL, and TNIE…IFEK. The N-linked (GlcNAc...) asparagine glycan is linked to N261. 2 N-linked (GlcNAc...) asparagine glycosylation sites follow: N299 and N310. The LRR 11; degenerate repeat unit spans residues 337 to 357; it reads LKKLSLFRNDNLDGGLEFLSF. LRR repeat units lie at residues 358-382, 383-406, 408-428, 429-452, 454-476, 477-500, 502-524, 525-549, 551-572, 573-597, 599-623, 667-690, 691-714, 715-739, and 741-759; these read NTQL…ISGL, QNLE…IFSL, SLVE…EFKS, KTLS…LLNQ, NLQL…ICNL, KTLI…VVER, EYLS…TFSV, GNIL…LINC, YLAL…WLGH, LSQL…GNTN, FTRL…ILGN, LDSN…IIGD, LVGL…SFQN, LSVL…LASL, and FLEV…IPKG. 3 N-linked (GlcNAc...) asparagine glycosylation sites follow: N378, N396, and N416. N-linked (GlcNAc...) asparagine glycosylation is present at N464. Residue N519 is glycosylated (N-linked (GlcNAc...) asparagine). The N-linked (GlcNAc...) asparagine glycan is linked to N563. 3 N-linked (GlcNAc...) asparagine glycosylation sites follow: N674, N698, and N714. N-linked (GlcNAc...) asparagine glycosylation is found at N746 and N767. The tract at residues 760 to 812 is C-cap/acidic domain; the sequence is KQFDSFGNTSYQGNDGLCGFPLSKLCGGDDQVTTPAELDQEEEEEDSPMISWQ. Residues 813–833 form a helical membrane-spanning segment; that stretch reads GVLVGYGCGLVIGLSVIYIMW. Topologically, residues 834-863 are cytoplasmic; it reads STQYPAWFSRMHLKLEQIVTTRMKKHKKRY.

It belongs to the RLP family.

It localises to the cell membrane. Its function is as follows. Involved in plant defense. Confers resistance to the fungal pathogen C.fulvum through recognition of the AVR9 elicitor protein. This chain is Receptor-like protein 9DC3, found in Solanum pimpinellifolium (Currant tomato).